Consider the following 273-residue polypeptide: Putative pyruvate, phosphate dikinase regulatory protein (273 aa).

153-160 (GISRTSKT) is a binding site for ADP.

This sequence belongs to the pyruvate, phosphate/water dikinase regulatory protein family. PDRP subfamily.

It catalyses the reaction N(tele)-phospho-L-histidyl/L-threonyl-[pyruvate, phosphate dikinase] + ADP = N(tele)-phospho-L-histidyl/O-phospho-L-threonyl-[pyruvate, phosphate dikinase] + AMP + H(+). It carries out the reaction N(tele)-phospho-L-histidyl/O-phospho-L-threonyl-[pyruvate, phosphate dikinase] + phosphate + H(+) = N(tele)-phospho-L-histidyl/L-threonyl-[pyruvate, phosphate dikinase] + diphosphate. In terms of biological role, bifunctional serine/threonine kinase and phosphorylase involved in the regulation of the pyruvate, phosphate dikinase (PPDK) by catalyzing its phosphorylation/dephosphorylation. The polypeptide is Putative pyruvate, phosphate dikinase regulatory protein (Rhizobium leguminosarum bv. trifolii (strain WSM2304)).